The primary structure comprises 254 residues: tRNA 2'-phosphotransferase 1 (254 aa).

M1 bears the N-acetylmethionine mark. Disordered regions lie at residues 1 to 30 (MNSF…DRDV) and 225 to 254 (RKPL…MTQQ). Over residues 233–244 (NEEKEHQRDSKH) the composition is skewed to basic and acidic residues.

Belongs to the KptA/TPT1 family.

It carries out the reaction 2'-phospho-[ligated tRNA] + NAD(+) = mature tRNA + ADP-alpha-D-ribose 1'',2''-cyclic phosphate + nicotinamide. In terms of biological role, catalyzes the last step of tRNA splicing, the transfer of the splice junction 2'-phosphate from ligated tRNA to NAD to produce ADP-ribose 1''-2'' cyclic phosphate. This chain is tRNA 2'-phosphotransferase 1 (TRPT1), found in Bos taurus (Bovine).